We begin with the raw amino-acid sequence, 420 residues long: Tyrosine--tRNA ligase 2 (420 aa).

Residue Y36 coordinates L-tyrosine. A 'HIGH' region motif is present at residues 41-50 (PTADSLHIGH). Y171 and Q175 together coordinate L-tyrosine. Residues 231–235 (KFGKT) carry the 'KMSKS' region motif. K234 is a binding site for ATP. The region spanning 354–420 (LSLVDLLVTS…GKKKYFLLKY (67 aa)) is the S4 RNA-binding domain.

The protein belongs to the class-I aminoacyl-tRNA synthetase family. TyrS type 1 subfamily. In terms of assembly, homodimer.

It localises to the cytoplasm. The catalysed reaction is tRNA(Tyr) + L-tyrosine + ATP = L-tyrosyl-tRNA(Tyr) + AMP + diphosphate + H(+). Catalyzes the attachment of tyrosine to tRNA(Tyr) in a two-step reaction: tyrosine is first activated by ATP to form Tyr-AMP and then transferred to the acceptor end of tRNA(Tyr). The chain is Tyrosine--tRNA ligase 2 from Enterococcus faecalis (strain ATCC 700802 / V583).